The chain runs to 439 residues: Ribosomal protein uS12 methylthiotransferase RimO (439 aa).

The MTTase N-terminal domain occupies 3–113 (HKVGFVSLGC…VVNAVHQHLP (111 aa)). Residues Cys12, Cys48, Cys77, Cys144, Cys148, and Cys151 each contribute to the [4Fe-4S] cluster site. Residues 130–367 (LTPRHYAYLK…MQVQAEISRN (238 aa)) enclose the Radical SAM core domain. Residues 370 to 436 (KNKIGSTQTV…DYDLYGDLEY (67 aa)) form the TRAM domain.

The protein belongs to the methylthiotransferase family. RimO subfamily. The cofactor is [4Fe-4S] cluster.

The protein localises to the cytoplasm. The enzyme catalyses L-aspartate(89)-[ribosomal protein uS12]-hydrogen + (sulfur carrier)-SH + AH2 + 2 S-adenosyl-L-methionine = 3-methylsulfanyl-L-aspartate(89)-[ribosomal protein uS12]-hydrogen + (sulfur carrier)-H + 5'-deoxyadenosine + L-methionine + A + S-adenosyl-L-homocysteine + 2 H(+). Functionally, catalyzes the methylthiolation of an aspartic acid residue of ribosomal protein uS12. This is Ribosomal protein uS12 methylthiotransferase RimO from Legionella pneumophila (strain Paris).